The sequence spans 506 residues: Histidine--tRNA ligase (506 aa).

This sequence belongs to the class-II aminoacyl-tRNA synthetase family. In terms of assembly, homodimer.

The protein resides in the cytoplasm. It catalyses the reaction tRNA(His) + L-histidine + ATP = L-histidyl-tRNA(His) + AMP + diphosphate + H(+). This Bradyrhizobium diazoefficiens (strain JCM 10833 / BCRC 13528 / IAM 13628 / NBRC 14792 / USDA 110) protein is Histidine--tRNA ligase (hisS).